A 123-amino-acid chain; its full sequence is Methylmalonyl-CoA carboxyltransferase 1.3S subunit (123 aa).

One can recognise a Biotinyl-binding domain in the interval glycine 46 to glycine 123. At lysine 89 the chain carries N6-biotinyllysine.

Transcarboxylase is composed of three subunits: 1.3S, 5S, and 12S. The core of the enzyme is composed of six 12S subunits. On each side of the core there are three pairs of 5S subunits. Each 5S dimer is attached to the core by two 1.3S subunits. Thus the total number of chains is 30 (6 + 12 + 12).

The catalysed reaction is (S)-methylmalonyl-CoA + pyruvate = propanoyl-CoA + oxaloacetate. Functionally, the biotinyl 1.3S subunit serves as a carboxyl carrier between the substrate-binding sites on the 12S and 5S subunits. In Propionibacterium freudenreichii subsp. shermanii, this protein is Methylmalonyl-CoA carboxyltransferase 1.3S subunit.